Here is a 675-residue protein sequence, read N- to C-terminus: Pescadillo homolog (675 aa).

Positions 309–331 (AGLDEAKEEPAAETTEESSETID) are disordered. Positions 352–471 (EAGSLFAPFT…RLVRPDLYAP (120 aa)) constitute a BRCT domain. The disordered stretch occupies residues 475–675 (LPPHLSPWVK…RRKLEKGAAK (201 aa)). Positions 498-518 (EQEEEGEAELDEDSDEEMEEA) are enriched in acidic residues. Residues 519–530 (TSDKKAEAKADV) are compositionally biased toward basic and acidic residues. Acidic residues-rich tracts occupy residues 532–541 (SESEDEDESV) and 549–580 (GTDD…DEEE). The stretch at 551–675 (DDDESESEDE…RRKLEKGAAK (125 aa)) forms a coiled coil. Residues 581–591 (AARTQHQKELE) show a composition bias toward basic and acidic residues. Over residues 611 to 623 (KKASQAKKIAAKK) the composition is skewed to basic residues. Residues 624–634 (RKEEEELERQK) show a composition bias toward basic and acidic residues.

This sequence belongs to the pescadillo family. Component of the NOP7 complex, composed of erb1, nop7 and ytm1. The complex is held together by erb1, which interacts with nop7 via its N-terminal domain and with ytm1 via a high-affinity interaction between the seven-bladed beta-propeller domains of the 2 proteins. The NOP7 complex associates with the 66S pre-ribosome.

The protein localises to the nucleus. It is found in the nucleolus. It localises to the nucleoplasm. Component of the NOP7 complex, which is required for maturation of the 25S and 5.8S ribosomal RNAs and formation of the 60S ribosome. The sequence is that of Pescadillo homolog (nop7) from Aspergillus fumigatus (strain CBS 144.89 / FGSC A1163 / CEA10) (Neosartorya fumigata).